A 371-amino-acid polypeptide reads, in one-letter code: Mannose-1-phosphate guanylyltransferase catalytic subunit beta (371 aa).

A substrate-binding domain region spans residues 14 to 233 (RALILVGGYG…TGFWMDIGQP (220 aa)). GDP-alpha-D-mannose is bound at residue aspartate 122. Aspartate 122 contacts Mg(2+). The active site involves lysine 173. Aspartate 229 lines the GDP-alpha-D-mannose pocket. Residue aspartate 229 participates in Mg(2+) binding. The hexapeptide repeat domain stretch occupies residues 256 to 371 (YTGPGVVGNV…ASVPEPQIIM (116 aa)).

It belongs to the transferase hexapeptide repeat family. In terms of assembly, component of the GMPPA-GMPPB mannose-1-phosphate guanylyltransferase complex composed of 4 Gmppa subunits and 8 Gmppb subunits; the complex is organized into three layers, a central layer made up of 2 Gmppa dimers sandwiched between two layers each made up of 2 Gmppb dimers. Gmppb catalytic activity is reduced when part of the complex and binding of GDP-alpha-D-Mannose by Gmppa induces allosteric feedback inhibition of Gmppb. Requires Mg(2+) as cofactor.

It carries out the reaction alpha-D-mannose 1-phosphate + GTP + H(+) = GDP-alpha-D-mannose + diphosphate. The protein operates within nucleotide-sugar biosynthesis; GDP-alpha-D-mannose biosynthesis; GDP-alpha-D-mannose from alpha-D-mannose 1-phosphate (GTP route): step 1/1. With respect to regulation, enzyme activity is reduced by incorporation into the GMPPA-GMPPB mannose-1-phosphate guanylyltransferase complex. Allosterically inhibited, when part of the GMPPA-GMPPB complex, by GDP-alpha-D-mannose binding to Gmppa. Its function is as follows. Catalytic subunit of the GMPPA-GMPPB mannose-1-phosphate guanylyltransferase complex. Catalyzes the formation of GDP-mannose, an essential precursor of glycan moieties of glycoproteins and glycolipids. Can catalyze the reverse reaction in vitro. Together with GMPPA regulates GDP-alpha-D-mannose levels. The chain is Mannose-1-phosphate guanylyltransferase catalytic subunit beta from Drosophila pseudoobscura pseudoobscura (Fruit fly).